Here is a 340-residue protein sequence, read N- to C-terminus: TATA-box-binding protein (340 aa).

Residues 1–78 (MNLNSPAVSM…HSLQGSSMQM (78 aa)) form a disordered region. Residues 57 to 68 (PQSIQPMQSQQM) show a composition bias toward low complexity. Residues 69–78 (HSLQGSSMQM) are compositionally biased toward polar residues. 2 consecutive repeat copies span residues 168 to 244 (LQNI…ARIV) and 258 to 335 (VQNM…YPIL).

The protein belongs to the TBP family. In terms of assembly, component of the TFIID basal transcription factor complex, composed of TATA-box-binding protein tbp-1, and a number of TBP-associated factors (TAFs). Binds DNA as monomer.

It is found in the nucleus. Functionally, the TFIID basal transcription factor complex plays a major role in the initiation of RNA polymerase II (Pol II)-dependent transcription. TFIID recognizes and binds promoters via its subunit tbp-1, a TATA-box-binding protein, and promotes assembly of the pre-initiation complex (PIC). The TFIID complex consists of tbp-1 and TBP-associated factors (TAFs). General transcription factor that functions at the core of the TFIID complex. The sequence is that of TATA-box-binding protein (tbp-1) from Caenorhabditis elegans.